Here is a 506-residue protein sequence, read N- to C-terminus: Allantoinase (506 aa).

Zn(2+)-binding residues include His-105, His-107, Lys-195, His-231, His-292, and Asp-366. Lys-195 carries the N6-carboxylysine modification.

The protein belongs to the metallo-dependent hydrolases superfamily. Allantoinase family. Homotetramer. Requires Zn(2+) as cofactor. Carboxylation allows a single lysine to coordinate two zinc ions.

It catalyses the reaction (S)-allantoin + H2O = allantoate + H(+). Its pathway is nitrogen metabolism; (S)-allantoin degradation; allantoate from (S)-allantoin: step 1/1. Catalyzes the conversion of allantoin (5-ureidohydantoin) to allantoate by hydrolytic cleavage of the five-member hydantoin ring. Catalyzes the first step of the ureide allantoin degradation followed by the sequential activity of AAH, UGLYAH and UAH which allows a complete purine breakdown without the intermediate generation of urea. In Arabidopsis thaliana (Mouse-ear cress), this protein is Allantoinase (ALN).